A 274-amino-acid polypeptide reads, in one-letter code: NH(3)-dependent NAD(+) synthetase (274 aa).

Residue 46–53 participates in ATP binding; the sequence is GISGGQDS. Asp-52 is a Mg(2+) binding site. Arg-140 provides a ligand contact to deamido-NAD(+). Thr-160 provides a ligand contact to ATP. Residue Glu-165 coordinates Mg(2+). The deamido-NAD(+) site is built by Lys-173 and Asp-180. ATP-binding residues include Lys-189 and Thr-211. Residue 260–261 participates in deamido-NAD(+) binding; that stretch reads HK.

It belongs to the NAD synthetase family. In terms of assembly, homodimer.

It carries out the reaction deamido-NAD(+) + NH4(+) + ATP = AMP + diphosphate + NAD(+) + H(+). Its pathway is cofactor biosynthesis; NAD(+) biosynthesis; NAD(+) from deamido-NAD(+) (ammonia route): step 1/1. Its function is as follows. Catalyzes the ATP-dependent amidation of deamido-NAD to form NAD. Uses ammonia as a nitrogen source. This Streptococcus sanguinis (strain SK36) protein is NH(3)-dependent NAD(+) synthetase.